The primary structure comprises 275 residues: Polar tube protein 2 (275 aa).

Positions 1-18 are cleaved as a signal peptide; the sequence is MLLLLSAVAFVSATAVQS. N-linked (GlcNAc...) asparagine glycosylation is found at asparagine 132 and asparagine 248. Positions 233-275 are disordered; that stretch reads IQKKEIKESPKEGDRNTTQEYDGEGSAEDAEGQQPSADGEGLE. Residues 234–249 show a composition bias toward basic and acidic residues; that stretch reads QKKEIKESPKEGDRNT. Acidic residues predominate over residues 253–263; the sequence is YDGEGSAEDAE.

It localises to the spore polar tube. Functionally, involved in formation of a polar tube through which the infectious agent is passed on to the host cell. In Encephalitozoon intestinalis (Microsporidian parasite), this protein is Polar tube protein 2 (PTP2).